Reading from the N-terminus, the 760-residue chain is H(+)/Cl(-) exchange transporter 4 (760 aa).

Topologically, residues 1 to 67 are cytoplasmic; sequence MVNAGAMSGS…WEFIKSLLDA (67 aa). The required for localization in the endoplasmic reticulum stretch occupies residues 14–63; it reads MDFLDEPFPDVGTYEDFHTIDWLREKSRDTDRHRKITSKSKESIWEFIKS. Transmembrane regions (helical) follow at residues 68 to 105 and 151 to 174; these read WSGW…VCLS and LNYL…VRVF. The short motif at 180 to 184 is the Selectivity filter part_1 element; sequence GSGIP. S181 provides a ligand contact to chloride. Residues 183–190 constitute an intramembrane region (helical); that stretch reads IPEIKTIL. Transmembrane regions (helical) follow at residues 200-218 and 224-243; these read GKWT…VSSG and EGPL…SLFS. Residues 222-226 carry the Selectivity filter part_2 motif; it reads GKEGP. Intramembrane regions (helical) lie at residues 255–267 and 271–279; these read VLSA…VSVA and PIGGVLFSL. The next 5 helical transmembrane spans lie at 291 to 309, 333 to 358, 365 to 385, 442 to 462, and 467 to 486; these read LWRS…RSIN, FPFI…AWCR, LGKY…IIAY, MWQL…TFGM, and GLFI…VGIG. The short motif at 467 to 471 is the Selectivity filter part_3 element; the sequence is GLFIP. F469 contributes to the chloride binding site. 2 intramembrane regions (helical) span residues 514–528 and 532–543; these read GLYA…LGGV and TVSLVVIMFELT. The segment at residues 544–547 is an intramembrane region (note=Loop between two helices); the sequence is GGLE. Residues 548 to 566 form a helical membrane-spanning segment; that stretch reads YIVPLMAAAVTSKWVADAF. Over 567 to 760 the chain is Cytoplasmic; it reads GKEGIYEAHI…NQDPESIMFN (194 aa). Position 572 (Y572) interacts with chloride. In terms of domain architecture, CBS 1 spans 600 to 666; sequence MRPRRGEPPL…AIKNARQRQE (67 aa). ATP-binding positions include S610 and 631 to 633; that span reads YNG. Residues 667–696 are required for localization in the endoplasmic reticulum; that stretch reads GIVSNSIMYFTEEPPELPANSPHPLKLRRI. One can recognise a CBS 2 domain in the interval 697 to 755; the sequence is LNLSPFTVTDHTPMETVVDIFRKLGLRQCLVTRSGRLLGIITKKDVLRHMAQMANQDPE. 738-741 is a binding site for ATP; it reads TKKD.

Belongs to the chloride channel (TC 2.A.49) family. ClC-4/CLCN4 subfamily. In terms of assembly, monomer. Forms heterodimers with CLCN3. Abundant in skeletal muscle and also detectable in brain and heart.

It localises to the early endosome membrane. The protein resides in the late endosome membrane. It is found in the endoplasmic reticulum membrane. The protein localises to the lysosome membrane. Its subcellular location is the recycling endosome membrane. Strongly outwardly rectifying, electrogenic H(+)/Cl(-)exchanger which mediates the exchange of chloride ions against protons. The CLC channel family contains both chloride channels and proton-coupled anion transporters that exchange chloride or another anion for protons. The presence of conserved gating glutamate residues is typical for family members that function as antiporters. In Homo sapiens (Human), this protein is H(+)/Cl(-) exchange transporter 4 (CLCN4).